The following is a 261-amino-acid chain: CD40 ligand (261 aa).

Topologically, residues 1–22 are cytoplasmic; sequence MIETYNQPVPRSAATGPPVSMK. A helical; Signal-anchor for type II membrane protein membrane pass occupies residues 23–43; the sequence is IFMYLLTVFLITQMIGSALFA. Residues 44–261 are Extracellular-facing; it reads VYLHRRLDKI…GFTSFGLLKL (218 aa). Positions 122–261 constitute a THD domain; sequence IAAHVISEAS…GFTSFGLLKL (140 aa). Cys178 and Cys218 form a disulfide bridge. Asn240 is a glycosylation site (N-linked (GlcNAc...) asparagine).

Belongs to the tumor necrosis factor family. Homotrimer. Interacts with CD28. CD40 ligand, soluble form: Exists as either a monomer or a homotrimer. Forms a ternary complex between CD40 and integrins for CD40-CD40LG signaling. Post-translationally, the soluble form derives from the membrane form by proteolytic processing.

Its subcellular location is the cell membrane. It localises to the cell surface. The protein localises to the secreted. Cytokine that acts as a ligand to CD40/TNFRSF5. Costimulates T-cell proliferation and cytokine production. Its cross-linking on T-cells generates a costimulatory signal which enhances the production of IL4 and IL10 in conjunction with the TCR/CD3 ligation and CD28 costimulation. Induces the activation of NF-kappa-B. Induces the activation of kinases MAPK8 and PAK2 in T-cells. Mediates B-cell proliferation in the absence of co-stimulus as well as IgE production in the presence of IL4. Involved in immunoglobulin class switching. Its function is as follows. Acts as a ligand for integrins, specifically ITGA5:ITGB1 and ITGAV:ITGB3; both integrins and the CD40 receptor are required for activation of CD40-CD40LG signaling, which have cell-type dependent effects, such as B-cell activation, NF-kappa-B signaling and anti-apoptotic signaling. This chain is CD40 ligand (CD40LG), found in Callithrix jacchus (White-tufted-ear marmoset).